The sequence spans 131 residues: Holo-[acyl-carrier-protein] synthase (131 aa).

Residues Asp8 and Glu59 each coordinate Mg(2+).

The protein belongs to the P-Pant transferase superfamily. AcpS family. Mg(2+) serves as cofactor.

The protein resides in the cytoplasm. The catalysed reaction is apo-[ACP] + CoA = holo-[ACP] + adenosine 3',5'-bisphosphate + H(+). Transfers the 4'-phosphopantetheine moiety from coenzyme A to a Ser of acyl-carrier-protein. The protein is Holo-[acyl-carrier-protein] synthase of Rickettsia massiliae (strain Mtu5).